The following is a 625-amino-acid chain: DNA mismatch repair protein MutL (625 aa).

It belongs to the DNA mismatch repair MutL/HexB family.

In terms of biological role, this protein is involved in the repair of mismatches in DNA. It is required for dam-dependent methyl-directed DNA mismatch repair. May act as a 'molecular matchmaker', a protein that promotes the formation of a stable complex between two or more DNA-binding proteins in an ATP-dependent manner without itself being part of a final effector complex. The sequence is that of DNA mismatch repair protein MutL from Xanthomonas axonopodis pv. citri (strain 306).